The chain runs to 170 residues: MDLKQYITIVPDFPKPGILFKDITTLMDNGEAYKYATDQIVEYAREKQIDIVVGPEARGFIIGCPVAYALGVGFAPVRKEGKLPREVVRVEYGLEYGTDVLTMHKDAIKPGQRVLITDDLLATGGTMRATIDLVEQLGGVVAGLAFLIELTELGGRKKLEGYDILTLMQF.

The protein belongs to the purine/pyrimidine phosphoribosyltransferase family. As to quaternary structure, homodimer.

The protein localises to the cytoplasm. It catalyses the reaction AMP + diphosphate = 5-phospho-alpha-D-ribose 1-diphosphate + adenine. It functions in the pathway purine metabolism; AMP biosynthesis via salvage pathway; AMP from adenine: step 1/1. In terms of biological role, catalyzes a salvage reaction resulting in the formation of AMP, that is energically less costly than de novo synthesis. The sequence is that of Adenine phosphoribosyltransferase from Geobacillus thermodenitrificans (strain NG80-2).